The following is a 461-amino-acid chain: Phosphatidate cytidylyltransferase 1 (461 aa).

Residues 1–67 are disordered; that stretch reads MLELRHRGSC…IPEIPPSSDR (67 aa). Arg-7 is modified (omega-N-methylarginine). The span at 20-56 shows a compositional bias: basic and acidic residues; the sequence is PHREGEAAGGDHETESTSDKETDIDDRYGDLDSRTDS. A phosphoserine mark is found at Ser-35 and Ser-37. Transmembrane regions (helical) follow at residues 96–116, 149–169, 183–203, 230–250, 279–299, and 357–377; these read MISL…LLVL, FLLC…FATF, HRFI…LSLV, LVIQ…SSVI, GFIG…YVLS, and IALS…ASGF.

The protein belongs to the CDS family. Homodimer. Interacts with FOS; this interaction may enhance catalytic activity. Requires Mg(2+) as cofactor. Expressed in adult tissues such as placenta, brain, small intestine, ovary, testis and prostate. Highly expressed in fetal kidney, lung and brain. Lower level in fetal liver.

The protein localises to the endoplasmic reticulum membrane. The catalysed reaction is a 1,2-diacyl-sn-glycero-3-phosphate + CTP + H(+) = a CDP-1,2-diacyl-sn-glycerol + diphosphate. It catalyses the reaction 1-octadecanoyl-2-(5Z,8Z,11Z,14Z-eicosatetraenoyl)-sn-glycero-3-phosphate + CTP + H(+) = 1-octadecanoyl-2-(5Z,8Z,11Z,14Z-eicosatetraenoyl)-sn-glycero-3-cytidine-5'-diphosphate + diphosphate. The enzyme catalyses 1-octadecanoyl-2-(9Z,12Z-octadecadienoyl)-sn-glycero-3-phosphate + CTP + H(+) = 1-octadecanoyl-2-(9Z,12Z-octadecadienoyl)-sn-glycero-3-cytidine-5'-diphosphate + diphosphate. It carries out the reaction 1-hexadecanoyl-2-(5Z,8Z,11Z,14Z-eicosatetraenoyl)-sn-glycero-3-phosphate + CTP + H(+) = 1-hexadecanoyl-2-(5Z,8Z,11Z,14Z-eicosatetraenoyl)-sn-glycero-3-cytidine-5'-diphosphate + diphosphate. The catalysed reaction is 1,2-di-(5Z,8Z,11Z,14Z)-eicosatetraenoyl-sn-glycero-3-phosphate + CTP + H(+) = 1,2-di-(5Z,8Z,11Z,14Z-eicosatetraenoyl)-sn-glycero-3-cytidine-5'-diphosphate + diphosphate. It catalyses the reaction 1-octadecanoyl-2-(9Z-octadecenoyl)-sn-glycero-3-phosphate + CTP + H(+) = 1-octadecanoyl-2-(9Z-octadecenoyl)-sn-glycero-3-cytidine-5'-diphosphate + diphosphate. The enzyme catalyses 1-octadecanoyl-2-(4Z,7Z,10Z,13Z,16Z,19Z-docosahexaenoyl)-sn-glycero-3-phosphate + CTP + H(+) = 1-octadecanoyl-2-(4Z,7Z,10Z,13Z,16Z,19Z-docosahexaenoyl)-sn-glycero-3-cytidine-5'-diphosphate + diphosphate. It carries out the reaction 1,2-di-(9Z,12Z-octadecadienoyl)-sn-glycero-3-phosphate + CTP + H(+) = 1,2-di-(9Z,12Z-octadecadienoyl)-sn-glycero-3-cytidine-5'-diphosphate + diphosphate. The catalysed reaction is 1,2-di-(9Z-octadecenoyl)-sn-glycero-3-phosphate + CTP + H(+) = 1,2-di-(9Z-octadecenoyl)-sn-glycero-3-cytidine-5'-diphosphate + diphosphate. Its pathway is phospholipid metabolism; CDP-diacylglycerol biosynthesis; CDP-diacylglycerol from sn-glycerol 3-phosphate: step 3/3. With respect to regulation, inhibited by its anionic phospholipid end products, with phosphatidylinositol-(4,5)- bisphosphate showing the strongest inhibition. Catalyzes the conversion of phosphatidic acid (PA) to CDP-diacylglycerol (CDP-DAG), an essential intermediate in the synthesis of phosphatidylglycerol, cardiolipin and phosphatidylinositol. Exhibits almost no acyl chain preference for PA, showing no discrimination for the sn-1/sn-2 acyl chain composition of PAs. Plays an important role in regulating the growth of lipid droplets which are storage organelles at the center of lipid and energy homeostasis. Positively regulates the differentiation and development of adipocytes. This is Phosphatidate cytidylyltransferase 1 from Homo sapiens (Human).